The primary structure comprises 154 residues: MTGSNQPSDCYLAALRLLTGRDYTCAALRRKLQQKRFAAEEAQQAVERLIREGYLQDQRYAERLVAAVRQNGSFTGYRLQQELRRRGVPPELIDQVLRESPADGDELERARHLVERRYAGFDPQAADERQLRRVAGFLQRRGYRSDLIRQLFEK.

The protein belongs to the RecX family.

It localises to the cytoplasm. Modulates RecA activity. This is Regulatory protein RecX from Trichlorobacter lovleyi (strain ATCC BAA-1151 / DSM 17278 / SZ) (Geobacter lovleyi).